Consider the following 802-residue polypeptide: uncharacterized protein (802 aa).

Residues 6–41 enclose the EF-hand 1 domain; the sequence is SRSEKVKRIFQQFDGNLDGGLSREEMSALVVAVNPR. TPR repeat units follow at residues 229–262, 264–296, 305–338, 339–372, 373–406, 407–440, and 442–474; these read FDGH…QPTD, RPHF…AESG, PQIY…CPTH, YRAL…KPDY, ADAH…KPGH, VDAL…WPNH, and RAQL…TNRV. Residues 595 to 630 enclose the EF-hand 2 domain; the sequence is AIKAINEKILSVLDDSGSGRVDLGMFYAVIAPLCGG.

This is an uncharacterized protein from Arabidopsis thaliana (Mouse-ear cress).